The following is a 1035-amino-acid chain: Ephrin type-A receptor 6 (1035 aa).

The signal sequence occupies residues 1–22; it reads MGGCEVREFLLQFGFFLPLLTA. Over 23–549 the chain is Extracellular; that stretch reads WTGDCSHVSN…MAAEQGQILV (527 aa). Positions 33–211 constitute an Eph LBD domain; the sequence is QVVLLDTSTV…FYKKCPFTVR (179 aa). 2 consecutive Fibronectin type-III domains span residues 330–440 and 441–536; these read PPSA…TDQD and APSL…TGDE. Asparagine 342, asparagine 396, and asparagine 409 each carry an N-linked (GlcNAc...) asparagine glycan. Residues 550-570 traverse the membrane as a helical segment; it reads IATAAVGGFTLLVILTLFFLI. Over 571–1035 the chain is Cytoplasmic; sequence TGRCQWYIKA…MHIQEKGFHV (465 aa). Phosphotyrosine; by autocatalysis occurs at positions 605 and 611. The Protein kinase domain occupies 630–943; that stretch reads IRIERVIGAG…RNPSALHTLV (314 aa). ATP-binding positions include 636–644 and lysine 662; that span reads IGAGEFGEV. Aspartate 797 acts as the Proton acceptor in catalysis. Phosphotyrosine; by autocatalysis occurs at positions 830 and 977. Residues 960-1024 enclose the SAM domain; that stretch reads PLFVTVGDWL…VSSIQTLRLH (65 aa). Positions 1033–1035 match the PDZ-binding motif; that stretch reads FHV.

Belongs to the protein kinase superfamily. Tyr protein kinase family. Ephrin receptor subfamily. As to quaternary structure, heterotetramer upon binding of the ligand. The heterotetramer is composed of an ephrin dimer and a receptor dimer. Oligomerization is probably required to induce biological responses. Interacts (via SAM domain) with ANKS1A (via SAM domain). As to expression, brain.

It localises to the membrane. The catalysed reaction is L-tyrosyl-[protein] + ATP = O-phospho-L-tyrosyl-[protein] + ADP + H(+). Functionally, receptor tyrosine kinase which binds promiscuously GPI-anchored ephrin-A family ligands residing on adjacent cells, leading to contact-dependent bidirectional signaling into neighboring cells. The signaling pathway downstream of the receptor is referred to as forward signaling while the signaling pathway downstream of the ephrin ligand is referred to as reverse signaling. In Rattus norvegicus (Rat), this protein is Ephrin type-A receptor 6 (Epha6).